Reading from the N-terminus, the 370-residue chain is MADNNSILEKLDGLVARFEEVSTLITDPAVIADQKRYVKLTKEYKELDDLMKARKEYMQLLANIEEAKDILSNESDADMREMAKEEMDNSQERLPVLEEEIKLLLVPADPQDGKNAILEIRGGTGGDEAAIFAGDLFRMYAKFCETKGWKMEVSSANEGAAGGYKEIICSVTGDNVYGTLKYESGVHRVQRVPATETQGRVHTSAASVAVLPEAEEFDVVINEGEIKWDTFRSGGAGGQNVNKVESGVRLRYIWKNPNTGVAEEILIECTETRDQPKNKERALARLRTFIYDKEHQKYIDDIASKRKTMVSTGDRSAKIRTYNYPQGRITDHRINYTIYNLAAFMDGDIQECIDKLTVAENAERLKESEL.

The residue at position 239 (glutamine 239) is an N5-methylglutamine.

Belongs to the prokaryotic/mitochondrial release factor family. Post-translationally, methylated by PrmC. Methylation increases the termination efficiency of RF1.

The protein resides in the cytoplasm. Functionally, peptide chain release factor 1 directs the termination of translation in response to the peptide chain termination codons UAG and UAA. The protein is Peptide chain release factor 1 of Bacteroides fragilis (strain ATCC 25285 / DSM 2151 / CCUG 4856 / JCM 11019 / LMG 10263 / NCTC 9343 / Onslow / VPI 2553 / EN-2).